A 172-amino-acid polypeptide reads, in one-letter code: Myosin regulatory light chain RLC-A (172 aa).

Basic residues predominate over residues 1–16 (MSSKRAKTKTTKKRPQ). Positions 1 to 20 (MSSKRAKTKTTKKRPQRATS) are disordered. Threonine 19 is modified (phosphothreonine; by MLCK). Serine 20 carries the phosphoserine; by MLCK modification. EF-hand domains follow at residues 29–64 (SQIQEFKEAFNMIDQNRDGFIDKEDLHDMLASMGKN), 98–133 (DPEDVIRNAFACFDEEAIGTIQEDYLRELLTTMGDR), and 134–169 (FTDEEVDELYREAPIDKKGNFNYIEFTRILKHGAKD). Ca(2+) is bound by residues aspartate 42, asparagine 44, aspartate 46, and aspartate 53.

Myosin is a hexamer of 2 heavy chains and 4 light chains. Post-translationally, phosphorylation increases the actin-activated myosin ATPase activity and thereby regulates the contractile activity.

Its function is as follows. Myosin regulatory subunit that plays an important role in regulation of both smooth muscle and nonmuscle cell contractile activity via its phosphorylation. Implicated in cytokinesis, receptor capping, and cell locomotion. This chain is Myosin regulatory light chain RLC-A (Rlc-a), found in Rattus norvegicus (Rat).